Consider the following 601-residue polypeptide: Glutathione-regulated potassium-efflux system protein KefB (601 aa).

13 consecutive transmembrane segments (helical) span residues 5 to 25 (SLLM…PLAA), 29 to 49 (IGAV…GLGF), 55 to 75 (EILH…GLEL), 87 to 107 (IFGV…GLLW), 115 to 135 (AAII…LQLM), 152 to 172 (VLLF…LLAG), 180 to 202 (WMKL…YLLR), 207 to 227 (FIAA…LVLG), 230 to 250 (LFME…GILL), 268 to 288 (GLLL…GVLY), 291 to 311 (ILEI…VLYL), 324 to 344 (LQFS…FSAA), and 356 to 376 (PLLL…MQGV). The 120-residue stretch at 400–519 (KPQVIVVGFG…AGVTQFSRET (120 aa)) folds into the RCK N-terminal domain.

Belongs to the monovalent cation:proton antiporter 2 (CPA2) transporter (TC 2.A.37) family. KefB subfamily. In terms of assembly, interacts with the regulatory subunit KefG.

It is found in the cell inner membrane. Pore-forming subunit of a potassium efflux system that confers protection against electrophiles. Catalyzes K(+)/H(+) antiport. This chain is Glutathione-regulated potassium-efflux system protein KefB, found in Erwinia tasmaniensis (strain DSM 17950 / CFBP 7177 / CIP 109463 / NCPPB 4357 / Et1/99).